Reading from the N-terminus, the 469-residue chain is Putative dipeptidase SSP1012 (469 aa).

Residue H84 coordinates Zn(2+). D86 is an active-site residue. A Zn(2+)-binding site is contributed by D115. E149 serves as the catalytic Proton acceptor. The Zn(2+) site is built by E150, D173, and H440.

The protein belongs to the peptidase M20A family. The cofactor is Zn(2+).

The chain is Putative dipeptidase SSP1012 from Staphylococcus saprophyticus subsp. saprophyticus (strain ATCC 15305 / DSM 20229 / NCIMB 8711 / NCTC 7292 / S-41).